Reading from the N-terminus, the 321-residue chain is Reticulon-2 (321 aa).

Disordered stretches follow at residues 1–36 and 65–85; these read MGHVLSFTHCKDAPSTASSTPDSCPPEGEEDDSPVT and PPVRARRGLGQSRVHAAPREE. Residues 134–321 form the Reticulon domain; sequence VKDLLYWRDI…TVKKPPAKQK (188 aa). The next 2 helical transmembrane spans lie at 163 to 183 and 250 to 270; these read FSVISVFAYGCLIILSVTLTL and FLVIIYLLTYVGAVFNGITVL.

The protein localises to the endoplasmic reticulum membrane. The protein resides in the sarcoplasmic reticulum membrane. It is found in the cell membrane. Its subcellular location is the sarcolemma. It localises to the T-tubule. The protein localises to the cytoplasm. The protein resides in the myofibril. It is found in the sarcomere. Its subcellular location is the z line. It localises to the cytoskeleton. Functionally, inhibits amyloid precursor protein processing, probably by blocking BACE1 activity. Enhances trafficking of the glutamate transporter SLC1A1/EAAC1 from the endoplasmic reticulum to the cell surface. Plays a role in the translocation of SLC2A4/GLUT4 from intracellular membranes to the cell membrane which facilitates the uptake of glucose into the cell. The protein is Reticulon-2 of Xenopus tropicalis (Western clawed frog).